A 311-amino-acid chain; its full sequence is Putative methylthioribose-1-phosphate isomerase (311 aa).

Substrate contacts are provided by residues 46-48, Arg80, and Gln174; that span reads RGA. The active-site Proton donor is the Asp215. A substrate-binding site is contributed by 224–225; it reads NK.

This sequence belongs to the eIF-2B alpha/beta/delta subunits family. MtnA subfamily.

It catalyses the reaction 5-(methylsulfanyl)-alpha-D-ribose 1-phosphate = 5-(methylsulfanyl)-D-ribulose 1-phosphate. Catalyzes the interconversion of methylthioribose-1-phosphate (MTR-1-P) into methylthioribulose-1-phosphate (MTRu-1-P). The polypeptide is Putative methylthioribose-1-phosphate isomerase (Methanothermobacter thermautotrophicus (strain ATCC 29096 / DSM 1053 / JCM 10044 / NBRC 100330 / Delta H) (Methanobacterium thermoautotrophicum)).